The following is a 296-amino-acid chain: tRNA dimethylallyltransferase (296 aa).

2 to 9 lines the ATP pocket; it reads GPTASGKT. Residue 4-9 coordinates substrate; the sequence is TASGKT. Interaction with substrate tRNA stretches follow at residues 27–30, 151–155, and 232–237; these read DSAL, QRLSR, and RCVGYR.

This sequence belongs to the IPP transferase family. As to quaternary structure, monomer. It depends on Mg(2+) as a cofactor.

The enzyme catalyses adenosine(37) in tRNA + dimethylallyl diphosphate = N(6)-dimethylallyladenosine(37) in tRNA + diphosphate. Catalyzes the transfer of a dimethylallyl group onto the adenine at position 37 in tRNAs that read codons beginning with uridine, leading to the formation of N6-(dimethylallyl)adenosine (i(6)A). The chain is tRNA dimethylallyltransferase from Shewanella sp. (strain MR-7).